A 431-amino-acid chain; its full sequence is Na(+)-translocating NADH-quinone reductase subunit F (431 aa).

The helical transmembrane segment at 9–29 (FICIASLIFCAIGVILAGVIL) threads the bilayer. In terms of domain architecture, 2Fe-2S ferredoxin-type spans 39 to 133 (HPCKLKINDN…DMSLEIEERY (95 aa)). Residues cysteine 76, cysteine 82, cysteine 85, and cysteine 117 each coordinate [2Fe-2S] cluster. The region spanning 136–286 (ASSWEGTVIS…SGPYGESFMK (151 aa)) is the FAD-binding FR-type domain. Positions 289–413 (DRPLIFLIGG…PLHNSSILKL (125 aa)) are catalytic.

The protein belongs to the NqrF family. Composed of six subunits; NqrA, NqrB, NqrC, NqrD, NqrE and NqrF. Requires [2Fe-2S] cluster as cofactor. The cofactor is FAD.

The protein resides in the cell inner membrane. The enzyme catalyses a ubiquinone + n Na(+)(in) + NADH + H(+) = a ubiquinol + n Na(+)(out) + NAD(+). Its function is as follows. NQR complex catalyzes the reduction of ubiquinone-1 to ubiquinol by two successive reactions, coupled with the transport of Na(+) ions from the cytoplasm to the periplasm. The first step is catalyzed by NqrF, which accepts electrons from NADH and reduces ubiquinone-1 to ubisemiquinone by a one-electron transfer pathway. The protein is Na(+)-translocating NADH-quinone reductase subunit F of Chlamydia pneumoniae (Chlamydophila pneumoniae).